Here is a 140-residue protein sequence, read N- to C-terminus: Putative pre-16S rRNA nuclease (140 aa).

The protein belongs to the YqgF nuclease family.

The protein localises to the cytoplasm. Its function is as follows. Could be a nuclease involved in processing of the 5'-end of pre-16S rRNA. The chain is Putative pre-16S rRNA nuclease from Aeromonas hydrophila subsp. hydrophila (strain ATCC 7966 / DSM 30187 / BCRC 13018 / CCUG 14551 / JCM 1027 / KCTC 2358 / NCIMB 9240 / NCTC 8049).